We begin with the raw amino-acid sequence, 172 residues long: Endoribonuclease YbeY (172 aa).

Zn(2+) is bound by residues H137, H141, and H147.

This sequence belongs to the endoribonuclease YbeY family. Zn(2+) serves as cofactor.

The protein resides in the cytoplasm. In terms of biological role, single strand-specific metallo-endoribonuclease involved in late-stage 70S ribosome quality control and in maturation of the 3' terminus of the 16S rRNA. The protein is Endoribonuclease YbeY of Dehalococcoides mccartyi (strain ATCC BAA-2266 / KCTC 15142 / 195) (Dehalococcoides ethenogenes (strain 195)).